The following is a 440-amino-acid chain: tRNA(Ile)-lysidine synthase (440 aa).

An ATP-binding site is contributed by 29 to 34 (SGGLDS).

Belongs to the tRNA(Ile)-lysidine synthase family.

The protein localises to the cytoplasm. It catalyses the reaction cytidine(34) in tRNA(Ile2) + L-lysine + ATP = lysidine(34) in tRNA(Ile2) + AMP + diphosphate + H(+). In terms of biological role, ligates lysine onto the cytidine present at position 34 of the AUA codon-specific tRNA(Ile) that contains the anticodon CAU, in an ATP-dependent manner. Cytidine is converted to lysidine, thus changing the amino acid specificity of the tRNA from methionine to isoleucine. The chain is tRNA(Ile)-lysidine synthase from Pectobacterium atrosepticum (strain SCRI 1043 / ATCC BAA-672) (Erwinia carotovora subsp. atroseptica).